We begin with the raw amino-acid sequence, 46 residues long: GPSFCKADEKPCEYHSDCCNCCLSGICAPSTNWILPGCSTSSFFKI.

Residues Pro2 and Pro11 each carry the 4-hydroxyproline modification. Intrachain disulfides connect Cys5–Cys19, Cys12–Cys22, Cys18–Cys27, and Cys21–Cys38. Pro29 is modified (4-hydroxyproline). Residue Phe44 is modified to D-phenylalanine.

It belongs to the conotoxin I1 superfamily. As to expression, expressed by the venom duct.

Its subcellular location is the secreted. In terms of biological role, iota-conotoxins bind to voltage-gated sodium channels (Nav) and act as agonists by shifting the voltage-dependence of activation to more hyperpolarized levels. Produces general excitatory symptoms. The sequence is that of Iota-conotoxin-like R11.7 from Conus radiatus (Rayed cone).